The primary structure comprises 542 residues: Chaperonin GroEL 1 (542 aa).

Residues 29 to 32 (TIGP), 86 to 90 (DGTTT), glycine 415, 479 to 481 (NAA), and aspartate 495 contribute to the ATP site.

Belongs to the chaperonin (HSP60) family. Forms a cylinder of 14 subunits composed of two heptameric rings stacked back-to-back. Interacts with the co-chaperonin GroES.

Its subcellular location is the cytoplasm. The enzyme catalyses ATP + H2O + a folded polypeptide = ADP + phosphate + an unfolded polypeptide.. Its function is as follows. Together with its co-chaperonin GroES, plays an essential role in assisting protein folding. The GroEL-GroES system forms a nano-cage that allows encapsulation of the non-native substrate proteins and provides a physical environment optimized to promote and accelerate protein folding. This chain is Chaperonin GroEL 1, found in Streptomyces avermitilis (strain ATCC 31267 / DSM 46492 / JCM 5070 / NBRC 14893 / NCIMB 12804 / NRRL 8165 / MA-4680).